Consider the following 121-residue polypeptide: Large ribosomal subunit protein uL14c (121 aa).

The protein belongs to the universal ribosomal protein uL14 family. In terms of assembly, part of the 50S ribosomal subunit.

The protein resides in the plastid. It is found in the chloroplast. Functionally, binds to 23S rRNA. The polypeptide is Large ribosomal subunit protein uL14c (Thalassiosira pseudonana (Marine diatom)).